Reading from the N-terminus, the 382-residue chain is MRRVILTTGGTGGHIFPALAVAEEITRRYPKARILFLGGQYGPEADLAARAGLEYVGLPVRGVMGRGLRALAAAGAMGLGVWRAVSVVRRFDPDIAVGFGGYAAFAGVLAARLCGRPAAIHEQNAIPGLTNRLLGHVVQRVFLSLPDTTGVFPARRCVPTGNPVRTAIVAAGAAGAAGAAEKGGVSRSAHSRRLLVMGGSLGARAINEAVVAALPALRDAGVELWHQTGVADWERVRAGYKQAGISEARVEAFIDDVASAYTWADLVLCRAGATSVAELAVAGKPSVLVPFPFATHNHQLHNARHVADAGAALVVEQKDVSPGADGRPAVALDRVLVELLADRERLADMGRAARAMGRPQAAAAVVDGMEAILAGRGARGVR.

UDP-N-acetyl-alpha-D-glucosamine contacts are provided by residues 11-13 (TGG), N124, R165, S200, I254, and Q299.

This sequence belongs to the glycosyltransferase 28 family. MurG subfamily.

The protein localises to the cell inner membrane. It catalyses the reaction di-trans,octa-cis-undecaprenyl diphospho-N-acetyl-alpha-D-muramoyl-L-alanyl-D-glutamyl-meso-2,6-diaminopimeloyl-D-alanyl-D-alanine + UDP-N-acetyl-alpha-D-glucosamine = di-trans,octa-cis-undecaprenyl diphospho-[N-acetyl-alpha-D-glucosaminyl-(1-&gt;4)]-N-acetyl-alpha-D-muramoyl-L-alanyl-D-glutamyl-meso-2,6-diaminopimeloyl-D-alanyl-D-alanine + UDP + H(+). It participates in cell wall biogenesis; peptidoglycan biosynthesis. Cell wall formation. Catalyzes the transfer of a GlcNAc subunit on undecaprenyl-pyrophosphoryl-MurNAc-pentapeptide (lipid intermediate I) to form undecaprenyl-pyrophosphoryl-MurNAc-(pentapeptide)GlcNAc (lipid intermediate II). This chain is UDP-N-acetylglucosamine--N-acetylmuramyl-(pentapeptide) pyrophosphoryl-undecaprenol N-acetylglucosamine transferase, found in Nitratidesulfovibrio vulgaris (strain DSM 19637 / Miyazaki F) (Desulfovibrio vulgaris).